The chain runs to 466 residues: SVGFKAGVKDYKLTYYTPEYETKDTDILAAFRVTPQPGVPPEEAGAAVAAESSTGTWTTVWTDGLTSLDRYKGRCYHIEPVAGEESQFIAYVAYPLDLFEEGSVTNMFTSIVGNVFGFKALRALRLEDLRIPVSYVKTFQGPPHGIQVERDKLNKYGRPLLGCTIKPKLGLSAKNYGRAVYECLRGGLDFTKDDENVNSQPFMRWRDRFLFCAEAIYKAQAETGEIKGHYLNATAGTCEEMMKRAVFARELGVPIVMHDYLTGGFTANTTLAHYCRDNGLLLHIHRAMHAVIDRQKNHGIHFRVLAKALRMSGGDHIHSGTVVGKLEGERDITLGFVDLLRDDFIEKDRSRGIYFTQDWVSLPGVLPVASGGIHVWHMPALTEIFGDDSVLQFGGGTLGHPWGNAPGAVANRVALEACVQARNEGRDLAREGNEIIREASKWSPELAAACEVWKEIKFIFPAMDTL.

Residue Lys5 is modified to N6,N6,N6-trimethyllysine. Residues Asn114 and Thr164 each coordinate substrate. Lys166 acts as the Proton acceptor in catalysis. Lys168 contacts substrate. Mg(2+)-binding residues include Lys192, Asp194, and Glu195. Lys192 carries the N6-carboxylysine modification. Residue His285 is the Proton acceptor of the active site. Arg286, His318, and Ser370 together coordinate substrate.

This sequence belongs to the RuBisCO large chain family. Type I subfamily. In terms of assembly, heterohexadecamer of 8 large chains and 8 small chains; disulfide-linked. The disulfide link is formed within the large subunit homodimers. Mg(2+) serves as cofactor. In terms of processing, the disulfide bond which can form in the large chain dimeric partners within the hexadecamer appears to be associated with oxidative stress and protein turnover.

The protein localises to the plastid. The protein resides in the chloroplast. The catalysed reaction is 2 (2R)-3-phosphoglycerate + 2 H(+) = D-ribulose 1,5-bisphosphate + CO2 + H2O. It catalyses the reaction D-ribulose 1,5-bisphosphate + O2 = 2-phosphoglycolate + (2R)-3-phosphoglycerate + 2 H(+). Its function is as follows. RuBisCO catalyzes two reactions: the carboxylation of D-ribulose 1,5-bisphosphate, the primary event in carbon dioxide fixation, as well as the oxidative fragmentation of the pentose substrate in the photorespiration process. Both reactions occur simultaneously and in competition at the same active site. This chain is Ribulose bisphosphate carboxylase large chain, found in Berzelia lanuginosa (Buttonbush).